A 362-amino-acid polypeptide reads, in one-letter code: Aminomethyltransferase (362 aa).

It belongs to the GcvT family. In terms of assembly, the glycine cleavage system is composed of four proteins: P, T, L and H.

The catalysed reaction is N(6)-[(R)-S(8)-aminomethyldihydrolipoyl]-L-lysyl-[protein] + (6S)-5,6,7,8-tetrahydrofolate = N(6)-[(R)-dihydrolipoyl]-L-lysyl-[protein] + (6R)-5,10-methylene-5,6,7,8-tetrahydrofolate + NH4(+). The glycine cleavage system catalyzes the degradation of glycine. The protein is Aminomethyltransferase of Listeria welshimeri serovar 6b (strain ATCC 35897 / DSM 20650 / CCUG 15529 / CIP 8149 / NCTC 11857 / SLCC 5334 / V8).